We begin with the raw amino-acid sequence, 299 residues long: Nucleotide-binding protein RER_30260 (299 aa).

Position 19-26 (19-26 (GLSGAGLS)) interacts with ATP. 70-73 (DVRS) is a binding site for GTP.

This sequence belongs to the RapZ-like family.

In terms of biological role, displays ATPase and GTPase activities. The sequence is that of Nucleotide-binding protein RER_30260 from Rhodococcus erythropolis (strain PR4 / NBRC 100887).